We begin with the raw amino-acid sequence, 357 residues long: Prostaglandin D2 receptor-like (357 aa).

Over 1–20 (MNESYRCQAATWVERGSSAT) the chain is Extracellular. N-linked (GlcNAc...) asparagine glycosylation is present at Asn2. The helical transmembrane segment at 21-41 (MGGVLFSAGLLGNLLALVLLA) threads the bilayer. Topologically, residues 42-57 (RSGLGSCRPGPLHPPP) are cytoplasmic. The helical transmembrane segment at 58-78 (SVFYVLVCGLTVTHLLGKCLI) threads the bilayer. Over 79 to 106 (SPMVLAAYAQNRSLKELLPASGNQLCEA) the chain is Extracellular. Asn89 is a glycosylation site (N-linked (GlcNAc...) asparagine). An intrachain disulfide couples Cys104 to Cys182. Residues 107–127 (FAFLMSFFGLASTLQLLAMAL) traverse the membrane as a helical segment. Topologically, residues 128-149 (ECWLSLGHPFFYQRHITARRGV) are cytoplasmic. Residues 150–170 (LVAPVAGAFSLAFCALPFAGF) traverse the membrane as a helical segment. Residues 171–194 (GKFVQYCPGTWCFIQMIHKKRSFS) are Extracellular-facing. Residues 195-215 (VIGFSVLYSSLMALLVLATVV) traverse the membrane as a helical segment. Residues 216–261 (CNLGAMSNLYAMHRRQRHHPRRCSRDRAQSGSDYRHGSPNPLEELD) lie on the Cytoplasmic side of the membrane. A helical transmembrane segment spans residues 262–282 (HFVLLALTTVLFTMCSLPLIY). The Extracellular segment spans residues 283-306 (RAYYGAFKLVDRADGDSEDLQALR). A helical membrane pass occupies residues 307-327 (FLSVISIVDPWIFIIFRTSVF). Residues 328-357 (RMLFHKAFTRPLIYRNWCSHSWQTNMESTL) are Cytoplasmic-facing.

The protein belongs to the G-protein coupled receptor 1 family. Strongly expressed in eye and gastrointestinal tract (GIT), moderately in the brain and oviduct and weakly in the epididymis. In the eye, expressed in the epithelium of the iris and ciliary body and in photoreceptor cells of the retina. In the brain, expressed in leptomeninges, choroid plexus and spinal cord (sensory and motor neurons of the dorsal and ventral horns). In the stomach, expressed in the mucous-secreting goblet cells and the columnar epithelium. Expressed in platelets.

The protein localises to the cell membrane. Receptor for prostaglandin D2 (PGD2). The activity of this receptor is mainly mediated by G(s) proteins that stimulate adenylate cyclase, resulting in an elevation of intracellular cAMP. A mobilization of calcium is also observed, but without formation of inositol 1,4,5-trisphosphate. This is Prostaglandin D2 receptor-like (Ptgdrl) from Rattus norvegicus (Rat).